A 348-amino-acid polypeptide reads, in one-letter code: Dihydroorotase (348 aa).

Zn(2+)-binding residues include histidine 17 and histidine 19. Substrate contacts are provided by residues 19-21 and asparagine 45; that span reads HLR. Positions 103, 140, and 178 each coordinate Zn(2+). Position 103 is an N6-carboxylysine (lysine 103). Histidine 140 contributes to the substrate binding site. Leucine 223 lines the substrate pocket. Zn(2+) is bound at residue aspartate 251. The active site involves aspartate 251. Substrate contacts are provided by histidine 255 and alanine 267.

Belongs to the metallo-dependent hydrolases superfamily. DHOase family. Class II DHOase subfamily. Homodimer. Zn(2+) is required as a cofactor.

The catalysed reaction is (S)-dihydroorotate + H2O = N-carbamoyl-L-aspartate + H(+). It functions in the pathway pyrimidine metabolism; UMP biosynthesis via de novo pathway; (S)-dihydroorotate from bicarbonate: step 3/3. Catalyzes the reversible cyclization of carbamoyl aspartate to dihydroorotate. In Klebsiella pneumoniae (strain 342), this protein is Dihydroorotase.